The chain runs to 492 residues: Glutamyl-tRNA(Gln) amidotransferase subunit B, mitochondrial (492 aa).

The protein belongs to the GatB/GatE family. GatB subfamily. In terms of assembly, subunit of the heterotrimeric GatFAB amidotransferase (AdT) complex, composed of A, B and F subunits.

It localises to the mitochondrion. It catalyses the reaction L-glutamyl-tRNA(Gln) + L-glutamine + ATP + H2O = L-glutaminyl-tRNA(Gln) + L-glutamate + ADP + phosphate + H(+). Allows the formation of correctly charged Gln-tRNA(Gln) through the transamidation of misacylated Glu-tRNA(Gln) in the mitochondria. The reaction takes place in the presence of glutamine and ATP through an activated gamma-phospho-Glu-tRNA(Gln). The chain is Glutamyl-tRNA(Gln) amidotransferase subunit B, mitochondrial from Komagataella phaffii (strain GS115 / ATCC 20864) (Yeast).